A 124-amino-acid chain; its full sequence is KETAAAKFQRQHMDSSTSSASSSNYCNQMMKSRNMTSDRCKPVNTFVHESLADVQAVCSQENVACKNGQTNCYQSYSTMSITDCRETGSSKYPNCAYKTTQANKHIIVACEGNPYVPVHYDASV.

The interval K1–N24 is disordered. 2 residues coordinate substrate: K7 and R10. Catalysis depends on H12, which acts as the Proton acceptor. 4 cysteine pairs are disulfide-bonded: C26/C84, C40/C95, C58/C110, and C65/C72. N34 is a glycosylation site (N-linked (GlcNAc...) asparagine; in river-breed only). Residues K41 to T45, K66, and R85 contribute to the substrate site. The active-site Proton donor is the H119.

This sequence belongs to the pancreatic ribonuclease family. In terms of assembly, monomer. Interacts with and forms tight 1:1 complexes with RNH1. Dimerization of two such complexes may occur. Interaction with RNH1 inhibits this protein. In terms of processing, swamp breed ribonuclease do not bind carbohydrate, but there is evidence of a polymorphic form that does. In terms of tissue distribution, pancreas.

It is found in the secreted. The catalysed reaction is an [RNA] containing cytidine + H2O = an [RNA]-3'-cytidine-3'-phosphate + a 5'-hydroxy-ribonucleotide-3'-[RNA].. It carries out the reaction an [RNA] containing uridine + H2O = an [RNA]-3'-uridine-3'-phosphate + a 5'-hydroxy-ribonucleotide-3'-[RNA].. Functionally, endonuclease that catalyzes the cleavage of RNA on the 3' side of pyrimidine nucleotides. Acts on single-stranded and double-stranded RNA. This is Ribonuclease pancreatic (RNASE1) from Bubalus bubalis (Domestic water buffalo).